The following is a 360-amino-acid chain: MRVDLFDFDLPENSIALRPASPRDSARMLVVRPDGAPVLEDRGVLDLPSFLRPGDALVFNDTKVIPAQLEGVRYRGEDISTPVSLTLHMRVAPSRWKAFARPARRLKPGDRISFGHGGSACLLGSLEAVVEEKGDAGEVTLRFDLSGPSLDEAIMAVGHIPLPPYIASKRADDERDRTDYQTVYAREEGAVAAPTAGLHFTDRLFAKLDEGGIERYFVTLHVGAGTFLPVKADDTADHVMHEEIGHVDPVTAAKLNAVRERGGRIVCVGTTSLRLIESAAAEDGNIRPWSGATGIFITPGYRFRAVDMLMTNFHLPKSTLFMLVSAFAGLETMHAAYAHAIATGYRFYSYGDSSLLFRKD.

The protein belongs to the QueA family. Monomer.

The protein localises to the cytoplasm. It carries out the reaction 7-aminomethyl-7-carbaguanosine(34) in tRNA + S-adenosyl-L-methionine = epoxyqueuosine(34) in tRNA + adenine + L-methionine + 2 H(+). Its pathway is tRNA modification; tRNA-queuosine biosynthesis. Transfers and isomerizes the ribose moiety from AdoMet to the 7-aminomethyl group of 7-deazaguanine (preQ1-tRNA) to give epoxyqueuosine (oQ-tRNA). This Rhizobium meliloti (strain 1021) (Ensifer meliloti) protein is S-adenosylmethionine:tRNA ribosyltransferase-isomerase.